Here is a 334-residue protein sequence, read N- to C-terminus: tRNA N6-adenosine threonylcarbamoyltransferase (334 aa).

Fe cation-binding residues include H111 and H115. Residues I134–G138, D167, G180, D184, and N272 each bind substrate. D300 is a Fe cation binding site.

The protein belongs to the KAE1 / TsaD family. It depends on Fe(2+) as a cofactor.

It localises to the cytoplasm. It carries out the reaction L-threonylcarbamoyladenylate + adenosine(37) in tRNA = N(6)-L-threonylcarbamoyladenosine(37) in tRNA + AMP + H(+). Its function is as follows. Required for the formation of a threonylcarbamoyl group on adenosine at position 37 (t(6)A37) in tRNAs that read codons beginning with adenine. Is involved in the transfer of the threonylcarbamoyl moiety of threonylcarbamoyl-AMP (TC-AMP) to the N6 group of A37, together with TsaE and TsaB. TsaD likely plays a direct catalytic role in this reaction. In Dictyoglomus turgidum (strain DSM 6724 / Z-1310), this protein is tRNA N6-adenosine threonylcarbamoyltransferase.